The following is a 262-amino-acid chain: Hemin import ATP-binding protein HmuV (262 aa).

One can recognise an ABC transporter domain in the interval 2–241 (IRASDISVRL…ETMEAVFGCR (240 aa)). Residue 34 to 41 (GPNGSGKT) coordinates ATP.

It belongs to the ABC transporter superfamily. Heme (hemin) importer (TC 3.A.1.14.5) family. As to quaternary structure, the complex is composed of two ATP-binding proteins (HmuV), two transmembrane proteins (HmuU) and a solute-binding protein (HmuT).

It is found in the cell inner membrane. Its function is as follows. Part of the ABC transporter complex HmuTUV involved in hemin import. Responsible for energy coupling to the transport system. This chain is Hemin import ATP-binding protein HmuV, found in Rhizobium meliloti (strain 1021) (Ensifer meliloti).